The sequence spans 218 residues: Ribose-5-phosphate isomerase A (218 aa).

Substrate contacts are provided by residues 28 to 31 (TGST), 81 to 84 (DGAD), and 94 to 97 (KGGG). Residue E103 is the Proton acceptor of the active site. K121 is a binding site for substrate.

It belongs to the ribose 5-phosphate isomerase family. In terms of assembly, homodimer.

The enzyme catalyses aldehydo-D-ribose 5-phosphate = D-ribulose 5-phosphate. The protein operates within carbohydrate degradation; pentose phosphate pathway; D-ribose 5-phosphate from D-ribulose 5-phosphate (non-oxidative stage): step 1/1. In terms of biological role, catalyzes the reversible conversion of ribose-5-phosphate to ribulose 5-phosphate. In Vibrio parahaemolyticus serotype O3:K6 (strain RIMD 2210633), this protein is Ribose-5-phosphate isomerase A.